Reading from the N-terminus, the 414-residue chain is MTQANLSETLFKPRFKHPETSTLVRRFNHGAQPPVQSALDGKTIPHWYRMINRLMWIWRGIDPREILDVQARIVMSDAERTDDDLYDTVIGYRGGNWIYEWATQAMVWQQKACAEEDPQLSGRHWLHAATLYNIAAYPHLKGDDLAEQAQALSNRAYEEAAQRLPGTMRQMEFTVPGGAPITGFLHMPKGDGPFPTVLMCGGLDAMQTDYYSLYERYFAPRGIAMLTIDMPSVGFSSKWKLTQDSSLLHQHVLKALPNVPWVDHTRVAAFGFRFGANVAVRLAYLESPRLKAVACLGPVVHTLLSDFKCQQQVPEMYLDVLASRLGMHDASDEALRVELNRYSLKVQGLLGRRCPTPMLSGYWKNDPFSPEEDSRLITSSTADGKLLEIPFNPVYRNFDKGLQEITDWIEKRLC.

The protein belongs to the FrsA family.

The catalysed reaction is a carboxylic ester + H2O = an alcohol + a carboxylate + H(+). Functionally, catalyzes the hydrolysis of esters. In Escherichia coli O17:K52:H18 (strain UMN026 / ExPEC), this protein is Esterase FrsA.